We begin with the raw amino-acid sequence, 757 residues long: 5-methyltetrahydropteroyltriglutamate--homocysteine methyltransferase (757 aa).

5-methyltetrahydropteroyltri-L-glutamate is bound by residues 15–18 (RELK) and Lys114. Residues 428-430 (IGS) and Glu481 each bind L-homocysteine. L-methionine-binding positions include 428-430 (IGS) and Glu481. 5-methyltetrahydropteroyltri-L-glutamate-binding positions include 512 to 513 (RC) and Trp558. Asp596 is a binding site for L-homocysteine. Position 596 (Asp596) interacts with L-methionine. Glu602 is a binding site for 5-methyltetrahydropteroyltri-L-glutamate. His639, Cys641, and Glu663 together coordinate Zn(2+). Catalysis depends on His692, which acts as the Proton donor. Cys724 lines the Zn(2+) pocket.

The protein belongs to the vitamin-B12 independent methionine synthase family. Zn(2+) serves as cofactor.

The enzyme catalyses 5-methyltetrahydropteroyltri-L-glutamate + L-homocysteine = tetrahydropteroyltri-L-glutamate + L-methionine. The protein operates within amino-acid biosynthesis; L-methionine biosynthesis via de novo pathway; L-methionine from L-homocysteine (MetE route): step 1/1. Catalyzes the transfer of a methyl group from 5-methyltetrahydrofolate to homocysteine resulting in methionine formation. In Lactococcus lactis subsp. cremoris (strain SK11), this protein is 5-methyltetrahydropteroyltriglutamate--homocysteine methyltransferase.